Here is a 115-residue protein sequence, read N- to C-terminus: Protein V2 (115 aa).

It belongs to the geminiviridae protein AV2/V2 family. In terms of assembly, interacts with host SGS3.

Its subcellular location is the host cytoplasm. It is found in the host perinuclear region. Through its interaction with host SGS3, acts as a suppressor of RNA-mediated gene silencing, also known as post-transcriptional gene silencing (PTGS), a mechanism of plant viral defense that limits the accumulation of viral RNAs. This is Protein V2 from Tomato yellow leaf curl Sardinia virus (TYLCSV).